Here is an 879-residue protein sequence, read N- to C-terminus: MGRPAPRPLLLALLSLAVCRGRVVRVPAGTLVRVVGTELVIPCNVSDYDGPSEQNFDWSFSSSGSSFVELASTWEVGFPAQQYRERLQRGDILLRRTANDAVELHIKNVQPSDQGHYKCSTPSTDATVQGNYEDTMQVKVLADALVVGPSSRPPPGLSLREGEPFELRCIASTTSPLHTHLALRWELHRGPVHRSILALSHEGRFHPGPGYEQRYHSGDVRLDTVGSDAYRLSVARALSADQGSYRCVVSEWITEQGSWQEIQEKAVEVATVVIQPTALQLAVPRTVSVTEGKDLDLSCNITTDRVDDVRPEVTWYFKKTPDTSLLASHMLARLDRDSLVHSSPHVALSHVDTRSYHLLVRDVSKENSGYYLCLVALWAPGHNRSWHKVAEAMSAPSGVSVTWLEPEYQVYLNASKVPGFSDDPTELQCRVIDTKRVDAGVRLTVSWYYRMNRRNDDVVASELLAVMDGDWTLRYGERSKQRAQDGEFIFSKEHTDTFSFRIQRTTEEDRGSYYCVVSAWTRQRNSSWVKSKDVFSKPVNIFWASEDSVLVVKARQPKPFFAAGNTFEMTCKVSSKNIKSPRYSVLITAEKPVGDLSSPNETKYIISLDQDSVVKLENWTDASRVDGVVLEKVQEDEFRYRMYQTQVSDAGLYRCMVTAWSPIGGSLWREAATSLSNPIEIDFQTSGPIFNASVHSDTLSVTRGDLIKLFCIVTVDGAVLDPDDMAFDVSWFAVHSFGLDKAPILLSSLDRKGVVTTGQRDWKSTVSLERVSVLEFLLQVHSSEDQDFGNYYCSVTPWVRSPTGSWQREAEIHSRPIFITVKMDVLNAFKYPLLIGVGLSTVIGLLSCLIGYCSSHWCCKKEVRETRRERRRLMSMEMD.

The signal sequence occupies residues 1 to 21 (MGRPAPRPLLLALLSLAVCRG). Ig-like C2-type domains lie at 22–129 (RVVR…ATVQ) and 149–268 (PSSR…KAVE). Topologically, residues 22–832 (RVVRVPAGTL…MDVLNAFKYP (811 aa)) are extracellular. 2 disulfide bridges follow: Cys-43/Cys-119 and Cys-169/Cys-247. An N-linked (GlcNAc...) asparagine glycan is attached at Asn-44. Residues 89 to 91 (RGD) carry the Cell attachment site motif. Thr-271 is modified (phosphothreonine). 4 Ig-like C2-type domains span residues 276 to 389 (PTAL…WHKV), 406 to 527 (PEYQ…RNSS), 544 to 662 (ASED…AWSP), and 688 to 813 (PIFN…AEIH). A disulfide bridge connects residues Cys-299 and Cys-373. 3 N-linked (GlcNAc...) asparagine glycosylation sites follow: Asn-300, Asn-383, and Asn-413. Residues 424–427 (PTEL) carry the Endoplasmic reticulum retention signal motif. A disulfide bridge links Cys-429 with Cys-515. Residues Asn-525, Asn-600, Asn-618, and Asn-691 are each glycosylated (N-linked (GlcNAc...) asparagine). The cysteines at positions 571 and 655 are disulfide-linked. The Cell attachment site motif lies at 703 to 705 (RGD). Cysteines 711 and 793 form a disulfide. Residues 833–853 (LLIGVGLSTVIGLLSCLIGYC) traverse the membrane as a helical segment. Residues 854–879 (SSHWCCKKEVRETRRERRRLMSMEMD) are Cytoplasmic-facing.

As to quaternary structure, interacts with CD9 and CD81. Part of a complex composed of CD9, CD81 and IGSF8. Also seems to interact with CD63, CD82 and CD151. In terms of tissue distribution, reproductive tissues, lung and heart.

It localises to the endoplasmic reticulum membrane. The protein resides in the golgi apparatus. Its subcellular location is the trans-Golgi network membrane. Inhibits the binding of prostaglandin F2-alpha (PGF2-alpha) to its specific FP receptor, by decreasing the receptor number rather than the affinity constant. Functional coupling with the prostaglandin F2-alpha receptor seems to occur. In myoblasts, associates with tetraspanins CD9 and CD81 to prevent myotube fusion during muscle regeneration. The polypeptide is Prostaglandin F2 receptor negative regulator (Ptgfrn) (Rattus norvegicus (Rat)).